Consider the following 1103-residue polypeptide: Voltage-dependent calcium channel subunit alpha-2/delta-1 (1103 aa).

An N-terminal signal peptide occupies residues 1 to 24 (MAAGCLLALTLTLFQSLLIGPSSE). Residues 25 to 1073 (EPFPSAVTIK…VLEDYTDCGG (1049 aa)) lie on the Extracellular side of the membrane. The N-linked (GlcNAc...) asparagine glycan is linked to N92. S119 bears the Phosphoserine mark. 2 N-linked (GlcNAc...) asparagine glycosylation sites follow: N136 and N184. The 178-residue stretch at 253–430 (DMLILVDVSG…INTQEYLDVL (178 aa)) folds into the VWFA domain. D259, S261, and S263 together coordinate a divalent metal cation. Positions 259 to 263 (DVSGS) match the MIDAS-like motif motif. N-linked (GlcNAc...) asparagine glycosylation is found at N324, N348, N468, N475, N604, N613, N675, N781, N824, N888, N895, N985, and N998. A disulfide bridge connects residues C404 and C1059. The Cache domain occupies 446-556 (WTNVYLDALE…NIQNPKSQEP (111 aa)). The chain crosses the membrane as a helical span at residues 1074–1094 (VSGLNPSLWYIIGIQFLLLWL). Over 1095–1103 (VSGSTHRLL) the chain is Cytoplasmic.

The protein belongs to the calcium channel subunit alpha-2/delta family. As to quaternary structure, dimer formed of alpha-2-1 and delta-1 chains; disulfide-linked. Voltage-dependent calcium channels are multisubunit complexes, consisting of alpha-1 (CACNA1), alpha-2 (CACNA2D), beta (CACNB) and delta (CACNA2D) subunits in a 1:1:1:1 ratio. Proteolytically processed into subunits alpha-2-1 and delta-1 that are disulfide-linked. Isoform 1 is expressed in skeletal muscle. Isoform 2 is expressed in the central nervous system. Isoform 2, isoform 4 and isoform 5 are expressed in neuroblastoma cells. Isoform 3, isoform 4 and isoform 5 are expressed in the aorta.

The protein localises to the membrane. It is found in the cell membrane. In terms of biological role, the alpha-2/delta subunit of voltage-dependent calcium channels regulates calcium current density and activation/inactivation kinetics of the calcium channel. Plays an important role in excitation-contraction coupling. The chain is Voltage-dependent calcium channel subunit alpha-2/delta-1 (CACNA2D1) from Homo sapiens (Human).